The following is a 93-amino-acid chain: Stromal cell-derived factor 1 (93 aa).

Positions 1 to 21 are cleaved as a signal peptide; that stretch reads MNAKVVVVLVLVLTALCLSDG. A Receptor activation motif motif is present at residues 22–23; it reads KP. A receptor and heparin binding region spans residues 29–33; that stretch reads RCPCR. 2 cysteine pairs are disulfide-bonded: C30–C55 and C32–C71. Receptor binding regions lie at residues 39 to 41, 48 to 50, and 60 to 70; these read VAR, KIL, and VARLKNNNRQV. Heparin is bound by residues 41-51, R62, Q69, and K85; that span reads RANVKHLKILN.

Belongs to the intercrine alpha (chemokine CxC) family. Monomer or homodimer; in equilibrium. Dimer formation is induced by non acidic pH and the presence of multivalent anions, and by binding to CXCR4 or heparin. Monomeric form is required for full chemotactic activity and resistance to ischemia/reperfusion injury, whereas the dimeric form acts as a partial agonist of CXCR4, stimulating Ca2+ mobilization but with no chemotactic activity and instead acts as a selective antagonist that blocks chemotaxis induced by the monomeric form. Interacts with the N-terminus of ACKR3. Interacts with integrin subunit ITGB3 (via the allosteric site (site 2)). Interacts with TNFAIP6 (via Link domain). In terms of assembly, (Microbial infection) Interacts with molluscum contagiosum virus protein MC148. Post-translationally, processed forms SDF-1-beta(3-72) and SDF-1-alpha(3-67) are produced after secretion by proteolytic cleavage of isoforms Beta and Alpha, respectively. The N-terminal processing is probably achieved by DPP4. Isoform Alpha is first cleaved at the C-terminus to yield a SDF-1-alpha(1-67) intermediate before being processed at the N-terminus. The C-terminal processing of isoform Alpha is reduced by binding to heparin and, probably, cell surface proteoglycans. As to expression, isoform Alpha and isoform Beta are ubiquitously expressed, with highest levels detected in liver, pancreas and spleen. Isoform Gamma is mainly expressed in heart, with weak expression detected in several other tissues. Isoform Delta, isoform Epsilon and isoform Theta have highest expression levels in pancreas, with lower levels detected in heart, kidney, liver and spleen.

Its subcellular location is the secreted. In terms of biological role, chemoattractant active on T-lymphocytes and monocytes but not neutrophils. Activates the C-X-C chemokine receptor CXCR4 to induce a rapid and transient rise in the level of intracellular calcium ions and chemotaxis. SDF-1-beta(3-72) and SDF-1-alpha(3-67) show a reduced chemotactic activity. Binding to cell surface proteoglycans seems to inhibit formation of SDF-1-alpha(3-67) and thus to preserve activity on local sites. Also binds to atypical chemokine receptor ACKR3, which activates the beta-arrestin pathway and acts as a scavenger receptor for SDF-1. Binds to the allosteric site (site 2) of integrins and activates integrins ITGAV:ITGB3, ITGA4:ITGB1 and ITGA5:ITGB1 in a CXCR4-independent manner. Acts as a positive regulator of monocyte migration and a negative regulator of monocyte adhesion via the LYN kinase. Stimulates migration of monocytes and T-lymphocytes through its receptors, CXCR4 and ACKR3, and decreases monocyte adherence to surfaces coated with ICAM-1, a ligand for beta-2 integrins. SDF1A/CXCR4 signaling axis inhibits beta-2 integrin LFA-1 mediated adhesion of monocytes to ICAM-1 through LYN kinase. Inhibits CXCR4-mediated infection by T-cell line-adapted HIV-1. Plays a protective role after myocardial infarction. Induces down-regulation and internalization of ACKR3 expressed in various cells. Has several critical functions during embryonic development; required for B-cell lymphopoiesis, myelopoiesis in bone marrow and heart ventricular septum formation. Stimulates the proliferation of bone marrow-derived B-cell progenitors in the presence of IL7 as well as growth of stromal cell-dependent pre-B-cells. This is Stromal cell-derived factor 1 (CXCL12) from Homo sapiens (Human).